We begin with the raw amino-acid sequence, 337 residues long: Quinolinate synthase (337 aa).

Iminosuccinate-binding residues include His38 and Ser59. Cys104 lines the [4Fe-4S] cluster pocket. Residues 130 to 132 (YAN) and Ser147 contribute to the iminosuccinate site. Residue Cys191 coordinates [4Fe-4S] cluster. Iminosuccinate is bound by residues 217 to 219 (HPE) and Thr234. Cys288 provides a ligand contact to [4Fe-4S] cluster.

Belongs to the quinolinate synthase family. Type 1 subfamily. [4Fe-4S] cluster serves as cofactor.

It localises to the cytoplasm. It catalyses the reaction iminosuccinate + dihydroxyacetone phosphate = quinolinate + phosphate + 2 H2O + H(+). It participates in cofactor biosynthesis; NAD(+) biosynthesis; quinolinate from iminoaspartate: step 1/1. Functionally, catalyzes the condensation of iminoaspartate with dihydroxyacetone phosphate to form quinolinate. The chain is Quinolinate synthase from Wigglesworthia glossinidia brevipalpis.